The sequence spans 109 residues: Phosphoribosyl-ATP pyrophosphatase (109 aa).

This sequence belongs to the PRA-PH family.

Its subcellular location is the cytoplasm. The enzyme catalyses 1-(5-phospho-beta-D-ribosyl)-ATP + H2O = 1-(5-phospho-beta-D-ribosyl)-5'-AMP + diphosphate + H(+). It functions in the pathway amino-acid biosynthesis; L-histidine biosynthesis; L-histidine from 5-phospho-alpha-D-ribose 1-diphosphate: step 2/9. The sequence is that of Phosphoribosyl-ATP pyrophosphatase from Sphingopyxis alaskensis (strain DSM 13593 / LMG 18877 / RB2256) (Sphingomonas alaskensis).